The chain runs to 154 residues: Cathelicidin-2 (154 aa).

The N-terminal stretch at 1–17 (MLSCWVLLLALLGGVCA) is a signal peptide. Positions 18–122 (LPAPLSYPQA…RCRDASSDPV (105 aa)) are excised as a propeptide. Intrachain disulfides connect Cys75-Cys86 and Cys97-Cys114.

Belongs to the cathelicidin family. In terms of tissue distribution, detected in trachea, lung, proventriculus, duodenum, jejunum, ileum, caeca, colon, caecal tonsil, bursa of Fabricius, kidney, ovary, testis, thymus, liver, spleen, bone marrow, skin, uropygial gland, muscle and brain.

The protein resides in the secreted. In terms of biological role, binds bacterial lipopolysaccharide (LPS). Has potent antimicrobial activity against Gram-positive and Gram-negative bacteria (in vitro). Has hemolytic activity (in vitro). May play a role in the innate immune response. The polypeptide is Cathelicidin-2 (CATHL2) (Gallus gallus (Chicken)).